A 489-amino-acid polypeptide reads, in one-letter code: MIEEHGGIVQSDGSIQPIDMSSFEKKSGSKKKEKKLTPKNINLLVQQSNQSVKQQKDAQKKQTSNGFNNNNSSNIHDGGMGGGSSSDNMDGSLDYSINNILKKEYEKINRNQVSSFSDVENFSEDDEDDDAEDDDSSDDQVNNKKNKPKKPSKLMKHDSVDGKNKMTPISSTSKKKVQHQLKEKNKKKGIKNDKKKSKPTKPTPKSVSSLPPPKIDSSTNNDNGSSDDDNSAKFKKYLFSIEPQKFEHTIEIPPFREINEFYDQDDGYSILSKNKYIGNWRDHNQYKSFDFDEEIDNQLDDNIINNDNDNDNDNDDDNDNDNDNDNDNDNDNDDDENGEDNGEDLNINNNNNNYNNNNNNNNNNNNNNNNNNNNNNNNNNNNNNFTSIQNDLDLQNNLNLSPIIITSSSSSSSSSPIGRNEIKTSLVSESGRSISSPILIPSPTLSSKSNNQENDDPTLVKSNNSFIKSIFSSGKIKRNSLQEYSIRNS.

4 disordered regions span residues 1–94, 109–229, 300–389, and 428–461; these read MIEE…GSLD, NRNQ…SDDD, DDNI…TSIQ, and SESGRSISSPILIPSPTLSSKSNNQENDDPTLVK. Composition is skewed to low complexity over residues 43–53 and 64–77; these read LLVQQSNQSVK and SNGFNNNNSSNIHD. The segment covering 121-138 has biased composition (acidic residues); it reads NFSEDDEDDDAEDDDSSD. Basic residues predominate over residues 144-154; it reads KKNKPKKPSKL. Basic and acidic residues predominate over residues 155-164; that stretch reads MKHDSVDGKN. The span at 173 to 199 shows a compositional bias: basic residues; sequence SKKKVQHQLKEKNKKKGIKNDKKKSKP. Residues 308-343 show a composition bias toward acidic residues; sequence NDNDNDNDDDNDNDNDNDNDNDNDNDDDENGEDNGE. Low complexity-rich tracts occupy residues 344 to 389 and 433 to 449; these read DLNI…TSIQ and SISSPILIPSPTLSSKS.

This is an uncharacterized protein from Dictyostelium discoideum (Social amoeba).